The following is a 159-amino-acid chain: Small ribosomal subunit protein uS7 (159 aa).

This sequence belongs to the universal ribosomal protein uS7 family. Part of the 30S ribosomal subunit. Contacts proteins S9 and S11.

Its function is as follows. One of the primary rRNA binding proteins, it binds directly to 16S rRNA where it nucleates assembly of the head domain of the 30S subunit. Is located at the subunit interface close to the decoding center, probably blocks exit of the E-site tRNA. This Elusimicrobium minutum (strain Pei191) protein is Small ribosomal subunit protein uS7.